The chain runs to 155 residues: Large ribosomal subunit protein eL24 (155 aa).

Over residues 93–123 (KRNARPETRNATRAKHAEAAKERKEKEAERR) the composition is skewed to basic and acidic residues. Residues 93–155 (KRNARPETRN…SAPKVQATSR (63 aa)) form a disordered region.

It belongs to the eukaryotic ribosomal protein eL24 family.

The chain is Large ribosomal subunit protein eL24 (RPL24) from Yarrowia lipolytica (strain CLIB 122 / E 150) (Yeast).